The sequence spans 163 residues: Lipoprotein signal peptidase (163 aa).

4 helical membrane passes run 9-29, 42-62, 67-87, and 93-113; these read AWPW…SKYL, ILPF…SFLG, WQII…ILWL, and SEIM…GNFI. Catalysis depends on residues Asp123 and Asp141. The chain crosses the membrane as a helical span at residues 137–157; sequence FNVADSAICVGVFLLIVYMLL.

Belongs to the peptidase A8 family.

It is found in the cell inner membrane. It catalyses the reaction Release of signal peptides from bacterial membrane prolipoproteins. Hydrolyzes -Xaa-Yaa-Zaa-|-(S,diacylglyceryl)Cys-, in which Xaa is hydrophobic (preferably Leu), and Yaa (Ala or Ser) and Zaa (Gly or Ala) have small, neutral side chains.. It participates in protein modification; lipoprotein biosynthesis (signal peptide cleavage). In terms of biological role, this protein specifically catalyzes the removal of signal peptides from prolipoproteins. The polypeptide is Lipoprotein signal peptidase (Coxiella burnetii (strain Dugway 5J108-111)).